The sequence spans 272 residues: tRNA pseudouridine synthase B (272 aa).

Catalysis depends on D38, which acts as the Nucleophile.

It belongs to the pseudouridine synthase TruB family. Type 1 subfamily.

The catalysed reaction is uridine(55) in tRNA = pseudouridine(55) in tRNA. Responsible for synthesis of pseudouridine from uracil-55 in the psi GC loop of transfer RNAs. This chain is tRNA pseudouridine synthase B, found in Campylobacter jejuni subsp. jejuni serotype O:6 (strain 81116 / NCTC 11828).